The chain runs to 385 residues: uncharacterized protein (385 aa).

It belongs to the mycobacterial PPE family.

This is an uncharacterized protein from Mycobacterium tuberculosis (strain CDC 1551 / Oshkosh).